The following is a 430-amino-acid chain: Enolase (430 aa).

Residues Met1–Lys140 form a sufficient for secretion region. A Phosphothreonine modification is found at Thr141. (2R)-2-phosphoglycerate is bound at residue Gln163. Glu205 serves as the catalytic Proton donor. Mg(2+) is bound at residue Asp242. The residue at position 259 (Ser259) is a Phosphoserine. Tyr281 carries the post-translational modification Phosphotyrosine. 2 residues coordinate Mg(2+): Glu287 and Asp314. Phosphoserine is present on Ser325. Residues Lys339, Arg368, Ser369, and Lys390 each coordinate (2R)-2-phosphoglycerate. Lys339 serves as the catalytic Proton acceptor.

Belongs to the enolase family. As to quaternary structure, homooctamer. Component of the RNA degradosome complex composed of rny, rnjA, rnjB, pnp, pfkA and eno (although rnjA and rnjB's presence is controversial). It depends on Mg(2+) as a cofactor. In terms of processing, phosphorylated during sporulation.

Its subcellular location is the cytoplasm. The protein resides in the secreted. The protein localises to the cell surface. The catalysed reaction is (2R)-2-phosphoglycerate = phosphoenolpyruvate + H2O. Its pathway is carbohydrate degradation; glycolysis; pyruvate from D-glyceraldehyde 3-phosphate: step 4/5. Covalent binding to the substrate (probably 2-PG) at Lys-339 of a small fraction of enolase causes inactivation of the enzyme, and possibly serves as a signal for the export of the protein. Citrate acts as a non-competitive inhibitor for both forward and reverse reactions, probably by chelating Mg(2+). In terms of biological role, catalyzes the reversible conversion of 2-phosphoglycerate (2-PG) into phosphoenolpyruvate (PEP). It is essential for the degradation of carbohydrates via glycolysis. Functionally, a component of the RNA degradosome, a multi-enzyme complex involved in RNA processing and messenger RNA degradation. The sequence is that of Enolase from Bacillus subtilis (strain 168).